The sequence spans 299 residues: MATTTTRGARDSPFPAPSEGEIKKELNMKGDTISGGSTELSYLKSLVSQLNDKIAQLESKASSTISSITGSTPSGVRMILIGPPGAGKGTQAPKILEKFNNCVCHLATGDMLREQVSKQTELGKMAKKIMDQGGLVSDEIMVSMIKDQLETNPSCKGGFILDGFPRTTPQAEKLDGMLKQKNQKLDHAVELKINDNLLISRITGRLVHPASGRSYHKEFSPPKKPMTDDVTGEPLIQRSDDNAETLKKRLATYHAQTAAVTDYYRKQGIWAPVDASQSPKVVWQSIQAIFDNKQPQPSN.

The disordered stretch occupies residues 1–30; it reads MATTTTRGARDSPFPAPSEGEIKKELNMKG. ATP is bound at residue 85–90; that stretch reads GAGKGT. The NMP stretch occupies residues 107–136; it reads ATGDMLREQVSKQTELGKMAKKIMDQGGLV. Residues Thr108, Arg113, 134 to 136, 163 to 166, and Gln170 contribute to the AMP site; these read GLV and GFPR. Residues 204-241 form an LID region; it reads GRLVHPASGRSYHKEFSPPKKPMTDDVTGEPLIQRSDD. Residues Arg205 and 214–215 each bind ATP; that span reads SY. The interval 212–237 is disordered; it reads GRSYHKEFSPPKKPMTDDVTGEPLIQ. Residues 215 to 227 are compositionally biased toward basic and acidic residues; the sequence is YHKEFSPPKKPMT. Positions 238 and 249 each coordinate AMP. Gln277 lines the ATP pocket.

The protein belongs to the adenylate kinase family. AK2 subfamily. As to quaternary structure, monomer.

It localises to the cytoplasm. Its subcellular location is the cytosol. The protein localises to the mitochondrion intermembrane space. The enzyme catalyses AMP + ATP = 2 ADP. Its function is as follows. Catalyzes the reversible transfer of the terminal phosphate group between ATP and AMP. Plays an important role in cellular energy homeostasis and in adenine nucleotide metabolism. Adenylate kinase activity is critical for regulation of the phosphate utilization and the AMP de novo biosynthesis pathways. The sequence is that of Adenylate kinase from Mycosarcoma maydis (Corn smut fungus).